We begin with the raw amino-acid sequence, 1084 residues long: Carbamoyl phosphate synthase large chain (1084 aa).

The segment at 1-401 is carboxyphosphate synthetic domain; it reads MPRRQDVEKV…ALLKAVRSLE (401 aa). ATP is bound by residues R129, R169, G175, G176, R208, L210, E215, G241, V242, H243, Q284, and E298. Residues 133–327 form the ATP-grasp 1 domain; the sequence is RALMKEIGEP…IAKVAAKIAV (195 aa). Mg(2+)-binding residues include Q284, E298, and N300. Mn(2+) is bound by residues Q284, E298, and N300. Positions 402–546 are oligomerization domain; sequence TGRDGLFHPA…YSCYDEENEA (145 aa). Residues 547-947 are carbamoyl phosphate synthetic domain; sequence VSPPGRKAVV…ALYKALLASG (401 aa). The ATP-grasp 2 domain occupies 672–862; sequence DQLLSDLSIP…LAKVATQVIA (191 aa). Residues R708, R747, E753, G778, V779, H780, S781, Q821, and E833 each contribute to the ATP site. Mg(2+) contacts are provided by Q821, E833, and N835. Q821, E833, and N835 together coordinate Mn(2+). The MGS-like domain occupies 948-1084; it reads VRVPHRGTVL…VGISAVQDWV (137 aa). Residues 948–1084 are allosteric domain; it reads VRVPHRGTVL…VGISAVQDWV (137 aa).

It belongs to the CarB family. In terms of assembly, composed of two chains; the small (or glutamine) chain promotes the hydrolysis of glutamine to ammonia, which is used by the large (or ammonia) chain to synthesize carbamoyl phosphate. Tetramer of heterodimers (alpha,beta)4. Mg(2+) serves as cofactor. Requires Mn(2+) as cofactor.

The enzyme catalyses hydrogencarbonate + L-glutamine + 2 ATP + H2O = carbamoyl phosphate + L-glutamate + 2 ADP + phosphate + 2 H(+). The catalysed reaction is hydrogencarbonate + NH4(+) + 2 ATP = carbamoyl phosphate + 2 ADP + phosphate + 2 H(+). It participates in amino-acid biosynthesis; L-arginine biosynthesis; carbamoyl phosphate from bicarbonate: step 1/1. The protein operates within pyrimidine metabolism; UMP biosynthesis via de novo pathway; (S)-dihydroorotate from bicarbonate: step 1/3. Functionally, large subunit of the glutamine-dependent carbamoyl phosphate synthetase (CPSase). CPSase catalyzes the formation of carbamoyl phosphate from the ammonia moiety of glutamine, carbonate, and phosphate donated by ATP, constituting the first step of 2 biosynthetic pathways, one leading to arginine and/or urea and the other to pyrimidine nucleotides. The large subunit (synthetase) binds the substrates ammonia (free or transferred from glutamine from the small subunit), hydrogencarbonate and ATP and carries out an ATP-coupled ligase reaction, activating hydrogencarbonate by forming carboxy phosphate which reacts with ammonia to form carbamoyl phosphate. This is Carbamoyl phosphate synthase large chain from Symbiobacterium thermophilum (strain DSM 24528 / JCM 14929 / IAM 14863 / T).